We begin with the raw amino-acid sequence, 117 residues long: Large ribosomal subunit protein bL17 (117 aa).

The protein belongs to the bacterial ribosomal protein bL17 family. In terms of assembly, part of the 50S ribosomal subunit. Contacts protein L32.

In Thermomicrobium roseum (strain ATCC 27502 / DSM 5159 / P-2), this protein is Large ribosomal subunit protein bL17.